Here is a 426-residue protein sequence, read N- to C-terminus: Serine--tRNA ligase (426 aa).

228-230 lines the L-serine pocket; sequence TSE. Residues 259–261 and Val-275 contribute to the ATP site; that span reads RRE. Glu-282 is a binding site for L-serine. An ATP-binding site is contributed by 346–349; that stretch reads ELTS. Residue Thr-386 participates in L-serine binding.

Belongs to the class-II aminoacyl-tRNA synthetase family. Type-1 seryl-tRNA synthetase subfamily. Homodimer. The tRNA molecule binds across the dimer.

The protein localises to the cytoplasm. The catalysed reaction is tRNA(Ser) + L-serine + ATP = L-seryl-tRNA(Ser) + AMP + diphosphate + H(+). It catalyses the reaction tRNA(Sec) + L-serine + ATP = L-seryl-tRNA(Sec) + AMP + diphosphate + H(+). It participates in aminoacyl-tRNA biosynthesis; selenocysteinyl-tRNA(Sec) biosynthesis; L-seryl-tRNA(Sec) from L-serine and tRNA(Sec): step 1/1. In terms of biological role, catalyzes the attachment of serine to tRNA(Ser). Is also able to aminoacylate tRNA(Sec) with serine, to form the misacylated tRNA L-seryl-tRNA(Sec), which will be further converted into selenocysteinyl-tRNA(Sec). In Arthrobacter sp. (strain FB24), this protein is Serine--tRNA ligase.